Consider the following 134-residue polypeptide: Two-component response regulator ORR5 (134 aa).

The 118-residue stretch at 16-133 (HVLAVDDSSV…DVSRLCSRVL (118 aa)) folds into the Response regulatory domain. Asp66 carries the post-translational modification 4-aspartylphosphate.

This sequence belongs to the ARR family. Type-A subfamily. Post-translationally, two-component system major event consists of a His-to-Asp phosphorelay between a sensor histidine kinase (HK) and a response regulator (RR). In plants, the His-to-Asp phosphorelay involves an additional intermediate named Histidine-containing phosphotransfer protein (HPt). This multistep phosphorelay consists of a His-Asp-His-Asp sequential transfer of a phosphate group between first a His and an Asp of the HK protein, followed by the transfer to a conserved His of the HPt protein and finally the transfer to an Asp in the receiver domain of the RR protein. Expressed in mature leaves and shoots, and at low levels in roots and flowers.

Functions as a response regulator involved in His-to-Asp phosphorelay signal transduction system. Phosphorylation of the Asp residue in the receiver domain activates the ability of the protein to promote the transcription of target genes. Type-A response regulators seem to act as negative regulators of the cytokinin signaling. This is Two-component response regulator ORR5 from Oryza sativa subsp. indica (Rice).